The chain runs to 335 residues: Ketol-acid reductoisomerase (NAD(P)(+)) (335 aa).

The KARI N-terminal Rossmann domain maps to 2-182 (AKIYKDEDIS…GCARAGVIES (181 aa)). NADP(+) is bound by residues 25–28 (YGSQ), arginine 49, serine 53, and 83–86 (DMVQ). Histidine 108 is an active-site residue. Glycine 134 contacts NADP(+). Positions 183 to 328 (TFKEETETDL…RKLREMMFRG (146 aa)) constitute a KARI C-terminal knotted domain. Residues aspartate 191, glutamate 195, glutamate 227, and glutamate 231 each contribute to the Mg(2+) site. Serine 252 contacts substrate.

It belongs to the ketol-acid reductoisomerase family. As to quaternary structure, homodimer. Mg(2+) is required as a cofactor.

It carries out the reaction (2R)-2,3-dihydroxy-3-methylbutanoate + NAD(+) = (2S)-2-acetolactate + NADH + H(+). The enzyme catalyses (2R)-2,3-dihydroxy-3-methylbutanoate + NADP(+) = (2S)-2-acetolactate + NADPH + H(+). It functions in the pathway amino-acid biosynthesis; L-isoleucine biosynthesis; L-isoleucine from 2-oxobutanoate: step 2/4. The protein operates within amino-acid biosynthesis; L-valine biosynthesis; L-valine from pyruvate: step 2/4. Functionally, involved in the biosynthesis of branched-chain amino acids (BCAA). Catalyzes an alkyl-migration followed by a ketol-acid reduction of (S)-2-acetolactate (S2AL) to yield (R)-2,3-dihydroxy-isovalerate. In the isomerase reaction, S2AL is rearranged via a Mg-dependent methyl migration to produce 3-hydroxy-3-methyl-2-ketobutyrate (HMKB). In the reductase reaction, this 2-ketoacid undergoes a metal-dependent reduction by NADPH or NADH to yield (R)-2,3-dihydroxy-isovalerate. The chain is Ketol-acid reductoisomerase (NAD(P)(+)) from Ignisphaera aggregans (strain DSM 17230 / JCM 13409 / AQ1.S1).